Consider the following 242-residue polypeptide: Small ribosomal subunit protein uS2 (242 aa).

Belongs to the universal ribosomal protein uS2 family.

This chain is Small ribosomal subunit protein uS2, found in Neisseria meningitidis serogroup B (strain ATCC BAA-335 / MC58).